The following is a 422-amino-acid chain: Glutamate-1-semialdehyde 2,1-aminomutase (422 aa).

Lys-265 is modified (N6-(pyridoxal phosphate)lysine).

It belongs to the class-III pyridoxal-phosphate-dependent aminotransferase family. HemL subfamily. The cofactor is pyridoxal 5'-phosphate.

Its subcellular location is the cytoplasm. The enzyme catalyses (S)-4-amino-5-oxopentanoate = 5-aminolevulinate. It functions in the pathway porphyrin-containing compound metabolism; protoporphyrin-IX biosynthesis; 5-aminolevulinate from L-glutamyl-tRNA(Glu): step 2/2. In Methanococcoides burtonii (strain DSM 6242 / NBRC 107633 / OCM 468 / ACE-M), this protein is Glutamate-1-semialdehyde 2,1-aminomutase.